A 502-amino-acid polypeptide reads, in one-letter code: ATP synthase subunit alpha (502 aa).

169–176 serves as a coordination point for ATP; sequence GDRQTGKT.

It belongs to the ATPase alpha/beta chains family. In terms of assembly, F-type ATPases have 2 components, CF(1) - the catalytic core - and CF(0) - the membrane proton channel. CF(1) has five subunits: alpha(3), beta(3), gamma(1), delta(1), epsilon(1). CF(0) has three main subunits: a(1), b(2) and c(9-12). The alpha and beta chains form an alternating ring which encloses part of the gamma chain. CF(1) is attached to CF(0) by a central stalk formed by the gamma and epsilon chains, while a peripheral stalk is formed by the delta and b chains.

The protein localises to the cell inner membrane. It carries out the reaction ATP + H2O + 4 H(+)(in) = ADP + phosphate + 5 H(+)(out). Its function is as follows. Produces ATP from ADP in the presence of a proton gradient across the membrane. The alpha chain is a regulatory subunit. In Geotalea daltonii (strain DSM 22248 / JCM 15807 / FRC-32) (Geobacter daltonii), this protein is ATP synthase subunit alpha.